A 160-amino-acid polypeptide reads, in one-letter code: Telomere length regulation protein TEN1 (160 aa).

In terms of assembly, interacts with CDC13 and STN1.

The protein localises to the nucleus. It localises to the chromosome. Its subcellular location is the telomere. Functionally, has a role in telomere length regulation and telomere end protection. Acts as an inhibitor of telomerase loading through its interaction with CDC13. This Saccharomyces cerevisiae (strain ATCC 204508 / S288c) (Baker's yeast) protein is Telomere length regulation protein TEN1 (TEN1).